A 508-amino-acid chain; its full sequence is Citrate lyase alpha chain (508 aa).

As to quaternary structure, oligomer with a subunit composition of (alpha,beta,gamma)6.

It localises to the cytoplasm. It carries out the reaction citrate = oxaloacetate + acetate. The catalysed reaction is citrate + acetyl-CoA = (3S)-citryl-CoA + acetate. In terms of biological role, represents a citrate:acetyl-ACP transferase. This Klebsiella pneumoniae protein is Citrate lyase alpha chain (citF).